The sequence spans 1126 residues: MFFKGKKKDKEKEKSHGNIGNVISVENKTGSQSNLHVEQNLSNEDLKIQFSQLLYELGVPEAKRVEMELWSNDKKWMLLVQNKDKIKENEEKMKQKGSLYETPQFYLSLLRENASIQKTISDLKVSLASNKLSWIDSFIGLSGFDEILKIFQTFQLKPEKNSIDFLILFDCVNIIKSILNSQSGVKSVMTTSHTFKVLVLCLDQSYPPELRNAVLQLTAALTLLPTVGHSYVLEAIENFKVSNREKVRFQTIIEGAKSVSNTQLHYEYLTSFMNLVNSIVNSPADLQVRIGLRSEFTALKLIELISNSKGVSEDLDTQINLFFECMEEDNDEVGAHYKEVNIRSPSEVSTKIDTLLQSHPALHHHFISIIKGLYTLASTQSDLGGSMWNILDESVGLILKDPSKESQLEKLQNENNNLKLQLSEIKLNNSNNNNNNNNSNNNNNDSNVSTPNINTGSPLLPPQQYQDLEQKLQLTQNEKNESQNKVKQLESEIKGLNSTLTGLQLKVTKLEADLLSVSVTTPPSDTNGTTSPPIEAPSSPSLGAPPPPPPPPPAPPVSGGGPPPPPPPPPPSSGGGPPPPPPPPSSGGPPPPPPPPGGMKKPGAPAVPNLPPKKSSVPSVKMVGLQWKKVNNNVIENSIWMNVKDYNLNDQFKQLEELFQVKKPTATTPTAPVGGASNVAVGGGSGSKSIVSTPTISILDPKRSQAIMIMLSRFKISFPDLSKAITNLDESKLNLEDAKSLLKFVPSSEEIELLKEEDPSCFGKPEQFLWELSKINRISEKLECFIFKQKLSTQIEELTPDINALLKGSMETKNNKSFHQILEIVLSLGNFINGGTPRGDIYGFKLDSLSGLLDCRSPSDSKVTLMTWLIQFLENKHPSLLEFHQEFTAIDEAKRVSIQNLRSEVASLKKGLTLLTNEVEKSEGASKTILSGFVGKSTDAVTLIEKQFNTALESFNSTVQFYGEDVKTSSPEEFFQHVSKFKNEFKRTIESIQKERENVQKLAARKKAAASGPSVPSASGSSINIAPKSGVSPITPTSKSSISISQKPPQSTQPSISVQQQQQQHHGDDDDDIPQNGTFMDQLMSKMKGGEAIRASRRASQYVFTQNGAGGVGAIDALNAALKNKK.

The interval 1–21 is disordered; the sequence is MFFKGKKKDKEKEKSHGNIGN. Residues 38–406 enclose the GBD/FH3 domain; that stretch reads EQNLSNEDLK…LILKDPSKES (369 aa). The span at 427–447 shows a compositional bias: low complexity; that stretch reads LNNSNNNNNNNNSNNNNNDSN. Residues 427–462 are disordered; the sequence is LNNSNNNNNNNNSNNNNNDSNVSTPNINTGSPLLPP. Residues 448–462 show a composition bias toward polar residues; the sequence is VSTPNINTGSPLLPP. The stretch at 463-514 forms a coiled coil; the sequence is QQYQDLEQKLQLTQNEKNESQNKVKQLESEIKGLNSTLTGLQLKVTKLEADL. Residues 518–532 are compositionally biased toward polar residues; it reads SVTTPPSDTNGTTSP. Disordered stretches follow at residues 518–619 and 1004–1078; these read SVTT…SVPS and ARKK…QNGT. Positions 527–611 constitute an FH1 domain; sequence NGTTSPPIEA…PGAPAVPNLP (85 aa). Residues 543–597 show a composition bias toward pro residues; that stretch reads GAPPPPPPPPPAPPVSGGGPPPPPPPPPPSSGGGPPPPPPPPSSGGPPPPPPPPG. Composition is skewed to low complexity over residues 598-607, 1009-1022, and 1032-1064; these read GMKKPGAPAV, AASG…SGSS, and SPIT…QQQQ. The 400-residue stretch at 612-1011 folds into the FH2 domain; it reads PKKSSVPSVK…LAARKKAAAS (400 aa). Residues 980 to 1010 adopt a coiled-coil conformation; it reads KFKNEFKRTIESIQKERENVQKLAARKKAAA. Positions 1071–1100 constitute a DAD domain; the sequence is DDIPQNGTFMDQLMSKMKGGEAIRASRRAS.

This sequence belongs to the formin homology family. Diaphanous subfamily. In terms of assembly, interacts (via GBD/FH3 domain) with activated Rho-GTPases. Interacts with pfyA and pfyB.

Its function is as follows. Formins play an important role in the nucleation of actin and the formation of linear actin filaments. The sequence is that of Formin-B (forB) from Dictyostelium discoideum (Social amoeba).